A 65-amino-acid polypeptide reads, in one-letter code: UPF0434 protein Mpe_A2486 (65 aa).

This sequence belongs to the UPF0434 family.

The chain is UPF0434 protein Mpe_A2486 from Methylibium petroleiphilum (strain ATCC BAA-1232 / LMG 22953 / PM1).